We begin with the raw amino-acid sequence, 23 residues long: Aldehyde dehydrogenase (23 aa).

Belongs to the aldehyde dehydrogenase family.

It carries out the reaction an aldehyde + NAD(+) + H2O = a carboxylate + NADH + 2 H(+). The chain is Aldehyde dehydrogenase from Moraxella sp. (strain TAE123).